We begin with the raw amino-acid sequence, 565 residues long: Adenine deaminase (565 aa).

This sequence belongs to the metallo-dependent hydrolases superfamily. Adenine deaminase family. Mn(2+) is required as a cofactor.

The enzyme catalyses adenine + H2O + H(+) = hypoxanthine + NH4(+). The sequence is that of Adenine deaminase from Sinorhizobium fredii (strain NBRC 101917 / NGR234).